We begin with the raw amino-acid sequence, 486 residues long: Glucose-6-phosphate 1-dehydrogenase (486 aa).

Residues 13–20 (GGTGDLAK), Arg-47, 86–87 (DV), and Lys-149 contribute to the NADP(+) site. Positions 179, 183, 217, and 236 each coordinate substrate. His-241 (proton acceptor) is an active-site residue. Substrate-binding residues include Lys-339 and Lys-344.

It belongs to the glucose-6-phosphate dehydrogenase family. Homodimer.

The catalysed reaction is D-glucose 6-phosphate + NAD(+) = 6-phospho-D-glucono-1,5-lactone + NADH + H(+). It carries out the reaction D-glucose 6-phosphate + NADP(+) = 6-phospho-D-glucono-1,5-lactone + NADPH + H(+). It participates in carbohydrate degradation; pentose phosphate pathway; D-ribulose 5-phosphate from D-glucose 6-phosphate (oxidative stage): step 1/3. In terms of biological role, catalyzes the oxidation of glucose 6-phosphate to 6-phosphogluconolactone. Can utilize either NADP(+) or NAD(+). In Leuconostoc mesenteroides, this protein is Glucose-6-phosphate 1-dehydrogenase.